A 74-amino-acid polypeptide reads, in one-letter code: Cytochrome b559 subunit alpha (74 aa).

A helical transmembrane segment spans residues 22 to 36 (VIHTVTIPSLFVAGW). A heme-binding site is contributed by H24.

Belongs to the PsbE/PsbF family. In terms of assembly, heterodimer of an alpha subunit and a beta subunit. PSII is composed of 1 copy each of membrane proteins PsbA, PsbB, PsbC, PsbD, PsbE, PsbF, PsbH, PsbI, PsbJ, PsbK, PsbL, PsbM, PsbT, PsbX, PsbY, PsbZ, Psb30/Ycf12, at least 3 peripheral proteins of the oxygen-evolving complex and a large number of cofactors. It forms dimeric complexes. Heme b is required as a cofactor.

The protein resides in the plastid. Its subcellular location is the cyanelle thylakoid membrane. Its function is as follows. This b-type cytochrome is tightly associated with the reaction center of photosystem II (PSII). PSII is a light-driven water:plastoquinone oxidoreductase that uses light energy to abstract electrons from H(2)O, generating O(2) and a proton gradient subsequently used for ATP formation. It consists of a core antenna complex that captures photons, and an electron transfer chain that converts photonic excitation into a charge separation. This is Cytochrome b559 subunit alpha from Cyanophora paradoxa.